The primary structure comprises 121 residues: Phosphoribosyl-AMP cyclohydrolase (121 aa).

D74 provides a ligand contact to Mg(2+). C75 provides a ligand contact to Zn(2+). Residues D76 and D78 each contribute to the Mg(2+) site. Residues C91 and C98 each coordinate Zn(2+).

It belongs to the PRA-CH family. Homodimer. It depends on Mg(2+) as a cofactor. Zn(2+) serves as cofactor.

The protein resides in the cytoplasm. The enzyme catalyses 1-(5-phospho-beta-D-ribosyl)-5'-AMP + H2O = 1-(5-phospho-beta-D-ribosyl)-5-[(5-phospho-beta-D-ribosylamino)methylideneamino]imidazole-4-carboxamide. The protein operates within amino-acid biosynthesis; L-histidine biosynthesis; L-histidine from 5-phospho-alpha-D-ribose 1-diphosphate: step 3/9. Catalyzes the hydrolysis of the adenine ring of phosphoribosyl-AMP. The sequence is that of Phosphoribosyl-AMP cyclohydrolase from Methanothrix thermoacetophila (strain DSM 6194 / JCM 14653 / NBRC 101360 / PT) (Methanosaeta thermophila).